A 280-amino-acid polypeptide reads, in one-letter code: Maltodextrin transport system permease protein MalD (280 aa).

Transmembrane regions (helical) follow at residues 15 to 35 (LTYLYLIGLSIVIIYPLLITI), 77 to 97 (LIIALITMAVQTSIIVLAGYA), 110 to 130 (LVFFLIIQMVPTMAALTAFFV), 142 to 162 (WFLIFLYVGGGIPMNAWLMKG), 200 to 220 (VQALWAFMGPFGDYILSSFLL), and 244 to 264 (IAYFSAGAILIALPICILFFF). The ABC transmembrane type-1 domain maps to 73-265 (YLNTLIIALI…LPICILFFFL (193 aa)).

Belongs to the binding-protein-dependent transport system permease family. MalFG subfamily.

It is found in the cell membrane. Its function is as follows. Part of the binding-protein-dependent transport system for maltodextrin; probably responsible for the translocation of the substrate across the membrane. This is Maltodextrin transport system permease protein MalD (malD) from Streptococcus pneumoniae (strain ATCC BAA-255 / R6).